Reading from the N-terminus, the 377-residue chain is Glutamate 5-kinase (377 aa).

Lys21 is a binding site for ATP. 3 residues coordinate substrate: Ser61, Asp149, and Asn161. ATP is bound by residues Ser181–Asp182 and Ser223–Lys229. The PUA domain maps to Arg286–Ala363.

It belongs to the glutamate 5-kinase family.

The protein localises to the cytoplasm. It carries out the reaction L-glutamate + ATP = L-glutamyl 5-phosphate + ADP. The protein operates within amino-acid biosynthesis; L-proline biosynthesis; L-glutamate 5-semialdehyde from L-glutamate: step 1/2. Functionally, catalyzes the transfer of a phosphate group to glutamate to form L-glutamate 5-phosphate. The sequence is that of Glutamate 5-kinase from Novosphingobium aromaticivorans (strain ATCC 700278 / DSM 12444 / CCUG 56034 / CIP 105152 / NBRC 16084 / F199).